The sequence spans 949 residues: Translation initiation factor IF-2 (949 aa).

3 disordered regions span residues 46–82 (LTAS…EAEA), 145–176 (EPAV…ERAS), and 188–361 (IPIT…KTEL). Positions 152–162 (ASPAVTAAKPV) are enriched in low complexity. Positions 163 to 172 (PATPAAPPQP) are enriched in pro residues. Residues 263 to 276 (PRDAAAPRPAGARP) are compositionally biased toward low complexity. The span at 334-344 (SREERQFDPFH) shows a compositional bias: basic and acidic residues. The 170-residue stretch at 449-618 (ERPPVVTIMG…LLQADLMDLK (170 aa)) folds into the tr-type G domain. Residues 458–465 (GHVDHGKT) are G1. 458-465 (GHVDHGKT) lines the GTP pocket. The tract at residues 483-487 (GITQH) is G2. A G3 region spans residues 504–507 (DTPG). GTP-binding positions include 504–508 (DTPGH) and 558–561 (NKID). Positions 558 to 561 (NKID) are G4. The interval 594-596 (SAK) is G5.

This sequence belongs to the TRAFAC class translation factor GTPase superfamily. Classic translation factor GTPase family. IF-2 subfamily.

Its subcellular location is the cytoplasm. Functionally, one of the essential components for the initiation of protein synthesis. Protects formylmethionyl-tRNA from spontaneous hydrolysis and promotes its binding to the 30S ribosomal subunits. Also involved in the hydrolysis of GTP during the formation of the 70S ribosomal complex. In Trichlorobacter lovleyi (strain ATCC BAA-1151 / DSM 17278 / SZ) (Geobacter lovleyi), this protein is Translation initiation factor IF-2.